A 344-amino-acid chain; its full sequence is Transmembrane protein 268 (344 aa).

The interval 1 to 31 (MACEPQMDPGGAAGPLPTSSPGWSPLPGGSP) is disordered. Over residues 14–27 (GPLPTSSPGWSPLP) the composition is skewed to low complexity. Transmembrane regions (helical) follow at residues 106–126 (AFAVVFYVVVWANIYSTSQMF) and 133–153 (AGVLLVTLAATSLTLTLVVIF). Residues 244 to 266 (TANEGPENLLEETPLLPDRPGST) are disordered. The segment covering 247–259 (EGPENLLEETPLL) has biased composition (low complexity).

As to quaternary structure, interacts with ITGAM; this interaction inhibits ITGAM degradation via the endosome-lysosome pathway. Interacts with ITGB4; this interaction prevents ITGB4 degradation.

It localises to the cell membrane. Its function is as follows. Stabilizes cell surface expression of ITGAM and participates in the adhesion and migration of phagocytes during bacterial clearance. This Bos taurus (Bovine) protein is Transmembrane protein 268 (TMEM268).